Here is a 332-residue protein sequence, read N- to C-terminus: D-alanine--D-alanine ligase (332 aa).

Residues 112 to 312 form the ATP-grasp domain; it reads KRIWRADGLP…YPDLCLRILA (201 aa). Residue 138-193 participates in ATP binding; sequence FQELGAPMIVKPSREGSTIGLTKVTSLGQCEQAYRLAAQHDPEVLCEQFIDGDETT. Residues Asp-265, Glu-279, and Asn-281 each coordinate Mg(2+).

This sequence belongs to the D-alanine--D-alanine ligase family. The cofactor is Mg(2+). Mn(2+) is required as a cofactor.

It is found in the cytoplasm. The enzyme catalyses 2 D-alanine + ATP = D-alanyl-D-alanine + ADP + phosphate + H(+). It functions in the pathway cell wall biogenesis; peptidoglycan biosynthesis. Its function is as follows. Cell wall formation. The chain is D-alanine--D-alanine ligase from Acidovorax ebreus (strain TPSY) (Diaphorobacter sp. (strain TPSY)).